Reading from the N-terminus, the 157-residue chain is Lipoprotein signal peptidase (157 aa).

4 helical membrane-spanning segments follow: residues 10-30 (LVFMGGFFLIFGVDQAIKYAI), 38-58 (SLMVDIVLVFNKGVAFSLLSF), 59-79 (LEGGLKYLQILLILGLFIFLI), and 84-104 (LFKTHAIEFGMVFGAGVSNVL). Catalysis depends on residues Asp114 and Asp131. Residues 122-142 (FDFAIFNFADVMIDVGVGVLL) form a helical membrane-spanning segment.

Belongs to the peptidase A8 family.

The protein localises to the cell inner membrane. The catalysed reaction is Release of signal peptides from bacterial membrane prolipoproteins. Hydrolyzes -Xaa-Yaa-Zaa-|-(S,diacylglyceryl)Cys-, in which Xaa is hydrophobic (preferably Leu), and Yaa (Ala or Ser) and Zaa (Gly or Ala) have small, neutral side chains.. It functions in the pathway protein modification; lipoprotein biosynthesis (signal peptide cleavage). In terms of biological role, this protein specifically catalyzes the removal of signal peptides from prolipoproteins. This is Lipoprotein signal peptidase from Helicobacter pylori (strain HPAG1).